The sequence spans 79 residues: Small ribosomal subunit protein bS18 (79 aa).

The protein belongs to the bacterial ribosomal protein bS18 family. In terms of assembly, part of the 30S ribosomal subunit. Forms a tight heterodimer with protein bS6.

In terms of biological role, binds as a heterodimer with protein bS6 to the central domain of the 16S rRNA, where it helps stabilize the platform of the 30S subunit. This is Small ribosomal subunit protein bS18 from Rhodopseudomonas palustris (strain HaA2).